Reading from the N-terminus, the 420-residue chain is Gamma-glutamyl phosphate reductase (420 aa).

Belongs to the gamma-glutamyl phosphate reductase family.

It localises to the cytoplasm. The enzyme catalyses L-glutamate 5-semialdehyde + phosphate + NADP(+) = L-glutamyl 5-phosphate + NADPH + H(+). It participates in amino-acid biosynthesis; L-proline biosynthesis; L-glutamate 5-semialdehyde from L-glutamate: step 2/2. In terms of biological role, catalyzes the NADPH-dependent reduction of L-glutamate 5-phosphate into L-glutamate 5-semialdehyde and phosphate. The product spontaneously undergoes cyclization to form 1-pyrroline-5-carboxylate. The polypeptide is Gamma-glutamyl phosphate reductase (Chlorobium luteolum (strain DSM 273 / BCRC 81028 / 2530) (Pelodictyon luteolum)).